Here is a 251-residue protein sequence, read N- to C-terminus: uncharacterized protein (251 aa).

Residues N149, N152, and N207 are each glycosylated (N-linked (GlcNAc...) asparagine; by host). Residues 226–246 (YLIFIIIIIIFIILILLWIKY) form a helical membrane-spanning segment.

Belongs to the glycosyltransferase 32 family.

Its subcellular location is the membrane. This is an uncharacterized protein from Acanthamoeba polyphaga (Amoeba).